A 368-amino-acid chain; its full sequence is Polymerase delta-interacting protein 2 (368 aa).

Residues 1 to 51 (MAACTARRALAVGSRWWSRSLTGARWPRPLCAAAGAGAFSPASTTTTRRHL) constitute a mitochondrion transit peptide. The region spanning 235–360 (RETTENIRVT…FSLESNKDEK (126 aa)) is the ApaG domain. T292 carries the post-translational modification Phosphothreonine.

Interacts with PCNA and POLD2. Interacts with SSBP1. Interacts with PRIMPOL; leading to enhance DNA polymerase activity of PRIMPOL. Interacts with POLH. Interacts with POLD1; leading to stimulate DNA polymerase activity of POLD1.

It is found in the mitochondrion matrix. The protein resides in the nucleus. In terms of biological role, involved in DNA damage tolerance by regulating translesion synthesis (TLS) of templates carrying DNA damage lesions such as 8oxoG and abasic sites. May act by stimulating activity of DNA polymerases involved in TLS, such as PRIMPOL and polymerase delta (POLD1). In Homo sapiens (Human), this protein is Polymerase delta-interacting protein 2.